The chain runs to 460 residues: ATP synthase subunit beta (460 aa).

150 to 157 (GGAGVGKT) serves as a coordination point for ATP.

This sequence belongs to the ATPase alpha/beta chains family. In terms of assembly, F-type ATPases have 2 components, CF(1) - the catalytic core - and CF(0) - the membrane proton channel. CF(1) has five subunits: alpha(3), beta(3), gamma(1), delta(1), epsilon(1). CF(0) has three main subunits: a(1), b(2) and c(9-12). The alpha and beta chains form an alternating ring which encloses part of the gamma chain. CF(1) is attached to CF(0) by a central stalk formed by the gamma and epsilon chains, while a peripheral stalk is formed by the delta and b chains.

The protein resides in the cell inner membrane. The enzyme catalyses ATP + H2O + 4 H(+)(in) = ADP + phosphate + 5 H(+)(out). Functionally, produces ATP from ADP in the presence of a proton gradient across the membrane. The catalytic sites are hosted primarily by the beta subunits. This Erwinia tasmaniensis (strain DSM 17950 / CFBP 7177 / CIP 109463 / NCPPB 4357 / Et1/99) protein is ATP synthase subunit beta.